The sequence spans 159 residues: Transmembrane protein 42 (159 aa).

4 helical membrane passes run 37-57 (FWGV…AASA), 68-88 (GFCV…WTFF), 100-120 (IASV…GFVL), and 124-144 (CQEV…TLIH).

It is found in the membrane. This is Transmembrane protein 42 (TMEM42) from Bos taurus (Bovine).